Consider the following 542-residue polypeptide: Putative cysteine ligase BshC (542 aa).

Residues 458–487 (VAKNAAIIQAQIEFLQQTLERALLSKHEVE) adopt a coiled-coil conformation.

This sequence belongs to the BshC family.

In terms of biological role, involved in bacillithiol (BSH) biosynthesis. May catalyze the last step of the pathway, the addition of cysteine to glucosamine malate (GlcN-Mal) to generate BSH. The sequence is that of Putative cysteine ligase BshC from Geobacillus thermodenitrificans (strain NG80-2).